The following is a 59-amino-acid chain: U-actitoxin-Aer2b (59 aa).

In terms of processing, contains 5 disulfide bonds.

Its subcellular location is the secreted. The protein localises to the nematocyst. In Anemonia erythraea (Sea anemone), this protein is U-actitoxin-Aer2b.